The primary structure comprises 347 residues: MATPAAPASGVRNGAGPEWGGFEENIQGGGSAVIDMENMDDTSGSSFEDMGELHQRLREEEVDADAAAAEEEDGEFLGMKGFKGQLSRQVADQMWQAGKRQASRAFSLYANIDILRPYFDVEPAQVRSRLLESMIPIKMVNFPQKVAGELYGPLMLVFTLVAILLHGMKTSDTIIREGTLMGTAIGTCFGYWLGVSSFIYFLAYLCNAQITMLQMLALLGYGLFGHCIVLFITYNIHLHALFYLFWLLVGGLSTLRMVAVLVSRTVGPTQRLLLCGTLAALHMLFLLYLHFAYHKVVEGILDTLEGPNIPPMQRVPRDIPAVLPAARLPVAVINATAKAIAVTLQSH.

A disordered region spans residues 1 to 31 (MATPAAPASGVRNGAGPEWGGFEENIQGGGS). At Ala-2 the chain carries N-acetylalanine; in Protein YIPF3, N-terminally processed. Over 2-145 (ATPAAPASGV…PIKMVNFPQK (144 aa)) the chain is Cytoplasmic. Residues 146-166 (VAGELYGPLMLVFTLVAILLH) traverse the membrane as a helical segment. Over 167–184 (GMKTSDTIIREGTLMGTA) the chain is Lumenal. A helical membrane pass occupies residues 185-205 (IGTCFGYWLGVSSFIYFLAYL). Topologically, residues 206–211 (CNAQIT) are cytoplasmic. The helical transmembrane segment at 212–234 (MLQMLALLGYGLFGHCIVLFITY) threads the bilayer. At 235 to 237 (NIH) the chain is on the lumenal side. Residues 238 to 260 (LHALFYLFWLLVGGLSTLRMVAV) traverse the membrane as a helical segment. Residues 261–271 (LVSRTVGPTQR) lie on the Cytoplasmic side of the membrane. A helical membrane pass occupies residues 272–292 (LLLCGTLAALHMLFLLYLHFA). Residues 293–347 (YHKVVEGILDTLEGPNIPPMQRVPRDIPAVLPAARLPVAVINATAKAIAVTLQSH) lie on the Lumenal side of the membrane. Asn-334 carries an N-linked (GlcNAc...) asparagine glycan.

Belongs to the YIP1 family. In terms of assembly, interacts with YIPF4 and YIPF5. In terms of tissue distribution, expressed by splenocytes (at protein level).

It localises to the cell membrane. It is found in the golgi apparatus. The protein resides in the cis-Golgi network membrane. The protein localises to the cytoplasm. Involved in the maintenance of the Golgi structure. May play a role in hematopoiesis. In Mus musculus (Mouse), this protein is Protein YIPF3 (Yipf3).